A 416-amino-acid chain; its full sequence is Ribulose bisphosphate carboxylase large chain (416 aa).

Asn102 and Thr152 together coordinate substrate. The Proton acceptor role is filled by Lys154. Lys156 lines the substrate pocket. Lys180, Asp182, and Glu183 together coordinate Mg(2+). Lys180 bears the N6-carboxylysine mark. Catalysis depends on His273, which acts as the Proton acceptor. 3 residues coordinate substrate: Arg274, His306, and Ser358.

The protein belongs to the RuBisCO large chain family. Type I subfamily. In terms of assembly, heterohexadecamer of 8 large chains and 8 small chains; disulfide-linked. The disulfide link is formed within the large subunit homodimers. Mg(2+) serves as cofactor. The disulfide bond which can form in the large chain dimeric partners within the hexadecamer appears to be associated with oxidative stress and protein turnover.

Its subcellular location is the plastid. The protein resides in the chloroplast. The enzyme catalyses 2 (2R)-3-phosphoglycerate + 2 H(+) = D-ribulose 1,5-bisphosphate + CO2 + H2O. It catalyses the reaction D-ribulose 1,5-bisphosphate + O2 = 2-phosphoglycolate + (2R)-3-phosphoglycerate + 2 H(+). Its function is as follows. RuBisCO catalyzes two reactions: the carboxylation of D-ribulose 1,5-bisphosphate, the primary event in carbon dioxide fixation, as well as the oxidative fragmentation of the pentose substrate in the photorespiration process. Both reactions occur simultaneously and in competition at the same active site. The protein is Ribulose bisphosphate carboxylase large chain (rbcL) of Arthropteris beckleri (Fern).